The primary structure comprises 117 residues: uncharacterized protein (117 aa).

2 consecutive transmembrane segments (helical) span residues 43 to 63 (APIM…LMLL) and 73 to 93 (AVQH…VFIV).

The protein resides in the cell membrane. This is an uncharacterized protein from Bacillus subtilis (strain 168).